The chain runs to 121 residues: Large ribosomal subunit protein bL12 (121 aa).

The protein belongs to the bacterial ribosomal protein bL12 family. As to quaternary structure, homodimer. Part of the ribosomal stalk of the 50S ribosomal subunit. Forms a multimeric L10(L12)X complex, where L10 forms an elongated spine to which 2 to 4 L12 dimers bind in a sequential fashion. Binds GTP-bound translation factors.

Its function is as follows. Forms part of the ribosomal stalk which helps the ribosome interact with GTP-bound translation factors. Is thus essential for accurate translation. The sequence is that of Large ribosomal subunit protein bL12 from Streptococcus suis (strain 98HAH33).